A 219-amino-acid chain; its full sequence is Transcription factor MYB23 (219 aa).

2 consecutive HTH myb-type domains span residues 9 to 61 (EHEY…MNYL) and 62 to 116 (SPNV…SKKL). 2 DNA-binding regions (H-T-H motif) span residues 37-61 (WNRIAKKTGLKRCGKSCRLRWMNYL) and 89-112 (WSLIAKRVPGRTDNQVKNYWNTHL).

In terms of assembly, interacts with BHLH2/EGL3/MYC146, BHLH12/MYC1 and GL3. As to expression, expressed in roots, seed coats, leaves, stems and flowers. Detected specifically in trichomes, and in the cell division and differentiation zone of the root.

Its subcellular location is the nucleus. Its function is as follows. Transcription activator, when associated with BHLH2/EGL3/MYC146 or BHLH12/MYC1. Regulates the epidermal cell fate specification. Mediates the formation of columellae and accumulation of mucilages on seed coats. Controls the elongation of epidermal cells positively in roots but negatively in stems, leading to the promotion of primary roots elongation and repression of leaves and stems elongation, respectively. Ovoids ectopic root-hair formation, probably by inducing GL2 in roots. Controls trichome initiation and branching. This chain is Transcription factor MYB23 (MYB23), found in Arabidopsis thaliana (Mouse-ear cress).